A 598-amino-acid polypeptide reads, in one-letter code: Leucine aminopeptidase 2, chloroplastic (598 aa).

Residues 1-71 (MATAASTSAA…GHRARMGHTA (71 aa)) constitute a chloroplast transit peptide. Mn(2+) is bound by residues Lys-367 and Asp-372. Lys-379 is a catalytic residue. Residues Asp-392, Asp-452, and Glu-454 each contribute to the Mn(2+) site. Arg-456 is an active-site residue.

It belongs to the peptidase M17 family. Homohexamer (dimer of homotrimers). Requires Mn(2+) as cofactor.

Its subcellular location is the plastid. It localises to the chloroplast. It carries out the reaction Release of an N-terminal amino acid, Xaa-|-Yaa-, in which Xaa is preferably Leu, but may be other amino acids including Pro although not Arg or Lys, and Yaa may be Pro. Amino acid amides and methyl esters are also readily hydrolyzed, but rates on arylamides are exceedingly low.. The catalysed reaction is Release of N-terminal proline from a peptide.. Functionally, presumably involved in the processing and regular turnover of intracellular proteins. Catalyzes the removal of unsubstituted N-terminal amino acids from various peptides. In Oryza sativa subsp. japonica (Rice), this protein is Leucine aminopeptidase 2, chloroplastic.